The chain runs to 236 residues: Large ribosomal subunit protein uL1 (236 aa).

Belongs to the universal ribosomal protein uL1 family. As to quaternary structure, part of the 50S ribosomal subunit.

Binds directly to 23S rRNA. The L1 stalk is quite mobile in the ribosome, and is involved in E site tRNA release. In terms of biological role, protein L1 is also a translational repressor protein, it controls the translation of the L11 operon by binding to its mRNA. The sequence is that of Large ribosomal subunit protein uL1 from Heliobacterium modesticaldum (strain ATCC 51547 / Ice1).